The following is a 216-amino-acid chain: Large ribosomal subunit protein uL3 (216 aa).

2 disordered regions span residues 89–108 (QRAS…VGGF) and 139–158 (NTHG…QCQS). The residue at position 157 (Gln157) is an N5-methylglutamine.

It belongs to the universal ribosomal protein uL3 family. In terms of assembly, part of the 50S ribosomal subunit. Forms a cluster with proteins L14 and L19. In terms of processing, methylated by PrmB.

Its function is as follows. One of the primary rRNA binding proteins, it binds directly near the 3'-end of the 23S rRNA, where it nucleates assembly of the 50S subunit. This is Large ribosomal subunit protein uL3 from Halorhodospira halophila (strain DSM 244 / SL1) (Ectothiorhodospira halophila (strain DSM 244 / SL1)).